Reading from the N-terminus, the 166-residue chain is Kelch repeat protein B10 (166 aa).

2 Kelch repeats span residues 25–76 and 77–129; these read TIFV…STFG and MLYF…KLNN.

The protein belongs to the poxviruses Kelch family.

This chain is Kelch repeat protein B10, found in Oryctolagus cuniculus (Rabbit).